A 319-amino-acid chain; its full sequence is Methionyl-tRNA formyltransferase (319 aa).

S113–P116 serves as a coordination point for (6S)-5,6,7,8-tetrahydrofolate.

The protein belongs to the Fmt family.

It carries out the reaction L-methionyl-tRNA(fMet) + (6R)-10-formyltetrahydrofolate = N-formyl-L-methionyl-tRNA(fMet) + (6S)-5,6,7,8-tetrahydrofolate + H(+). In terms of biological role, attaches a formyl group to the free amino group of methionyl-tRNA(fMet). The formyl group appears to play a dual role in the initiator identity of N-formylmethionyl-tRNA by promoting its recognition by IF2 and preventing the misappropriation of this tRNA by the elongation apparatus. This Pseudomonas fluorescens (strain Pf0-1) protein is Methionyl-tRNA formyltransferase.